Reading from the N-terminus, the 109-residue chain is Flagellar hook-basal body complex protein FliE (109 aa).

A disordered region spans residues 1 to 38; sequence MQAIHNDKSLLSPFSELNTDNRTQREESGSTFKEQKGG. Over residues 22–38 the composition is skewed to basic and acidic residues; that stretch reads RTQREESGSTFKEQKGG.

It belongs to the FliE family.

The protein resides in the bacterial flagellum basal body. This chain is Flagellar hook-basal body complex protein FliE, found in Helicobacter acinonychis (strain Sheeba).